A 241-amino-acid chain; its full sequence is Carboxy-S-adenosyl-L-methionine synthase (241 aa).

S-adenosyl-L-methionine contacts are provided by residues Y38, 63 to 65 (GCS), 88 to 89 (DN), 116 to 117 (DI), N131, and R198.

This sequence belongs to the class I-like SAM-binding methyltransferase superfamily. Cx-SAM synthase family. Homodimer.

The enzyme catalyses prephenate + S-adenosyl-L-methionine = carboxy-S-adenosyl-L-methionine + 3-phenylpyruvate + H2O. In terms of biological role, catalyzes the conversion of S-adenosyl-L-methionine (SAM) to carboxy-S-adenosyl-L-methionine (Cx-SAM). This chain is Carboxy-S-adenosyl-L-methionine synthase, found in Glaesserella parasuis serovar 5 (strain SH0165) (Haemophilus parasuis).